The chain runs to 334 residues: Tetraacyldisaccharide 4'-kinase (334 aa).

60-67 (TVGGTGKT) contributes to the ATP binding site.

This sequence belongs to the LpxK family.

It catalyses the reaction a lipid A disaccharide + ATP = a lipid IVA + ADP + H(+). It functions in the pathway glycolipid biosynthesis; lipid IV(A) biosynthesis; lipid IV(A) from (3R)-3-hydroxytetradecanoyl-[acyl-carrier-protein] and UDP-N-acetyl-alpha-D-glucosamine: step 6/6. Transfers the gamma-phosphate of ATP to the 4'-position of a tetraacyldisaccharide 1-phosphate intermediate (termed DS-1-P) to form tetraacyldisaccharide 1,4'-bis-phosphate (lipid IVA). This chain is Tetraacyldisaccharide 4'-kinase, found in Stutzerimonas stutzeri (strain A1501) (Pseudomonas stutzeri).